We begin with the raw amino-acid sequence, 508 residues long: Anthranilate synthase component 1 (508 aa).

Residues Ser51 and 283–285 contribute to the L-tryptophan site; that span reads PYM. 323–324 is a binding site for chorismate; the sequence is GT. Glu350 is a Mg(2+) binding site. Residues Tyr438, Arg458, 477–479, and Gly479 contribute to the chorismate site; that span reads GAG. Residue Glu492 participates in Mg(2+) binding.

This sequence belongs to the anthranilate synthase component I family. In terms of assembly, heterotetramer consisting of two non-identical subunits: a beta subunit (TrpG) and a large alpha subunit (TrpE). Mg(2+) serves as cofactor.

It catalyses the reaction chorismate + L-glutamine = anthranilate + pyruvate + L-glutamate + H(+). The protein operates within amino-acid biosynthesis; L-tryptophan biosynthesis; L-tryptophan from chorismate: step 1/5. With respect to regulation, feedback inhibited by tryptophan. In terms of biological role, part of a heterotetrameric complex that catalyzes the two-step biosynthesis of anthranilate, an intermediate in the biosynthesis of L-tryptophan. In the first step, the glutamine-binding beta subunit (TrpG) of anthranilate synthase (AS) provides the glutamine amidotransferase activity which generates ammonia as a substrate that, along with chorismate, is used in the second step, catalyzed by the large alpha subunit of AS (TrpE) to produce anthranilate. In the absence of TrpG, TrpE can synthesize anthranilate directly from chorismate and high concentrations of ammonia. This chain is Anthranilate synthase component 1 (trpE), found in Synechocystis sp. (strain ATCC 27184 / PCC 6803 / Kazusa).